The chain runs to 371 residues: Putative F-box/kelch-repeat protein At3g10510 (371 aa).

The 49-residue stretch at 13–61 (SVMTSIPDDVIMECIAPRVPRYNHSMLSLVSKQFRSLVASPRLYKTRSL) folds into the F-box domain. 3 Kelch repeats span residues 123–165 (NIFV…DMPV), 178–229 (KIYI…GPSS), and 257–305 (NECV…YIVS).

The sequence is that of Putative F-box/kelch-repeat protein At3g10510 from Arabidopsis thaliana (Mouse-ear cress).